The sequence spans 95 residues: Protein TusB (95 aa).

Belongs to the DsrH/TusB family. As to quaternary structure, heterohexamer, formed by a dimer of trimers. The hexameric TusBCD complex contains 2 copies each of TusB, TusC and TusD. The TusBCD complex interacts with TusE.

Its subcellular location is the cytoplasm. Functionally, part of a sulfur-relay system required for 2-thiolation of 5-methylaminomethyl-2-thiouridine (mnm(5)s(2)U) at tRNA wobble positions. The chain is Protein TusB from Pectobacterium parmentieri.